Consider the following 433-residue polypeptide: tRNA(Ile2) 2-agmatinylcytidine synthetase TiaS (433 aa).

The protein belongs to the TiaS family.

It is found in the cytoplasm. The enzyme catalyses cytidine(34) in tRNA(Ile2) + agmatine + ATP + H2O = 2-agmatinylcytidine(34) in tRNA(Ile2) + AMP + 2 phosphate + 2 H(+). Its function is as follows. ATP-dependent agmatine transferase that catalyzes the formation of 2-agmatinylcytidine (agm2C) at the wobble position (C34) of tRNA(Ile2), converting the codon specificity from AUG to AUA. This is tRNA(Ile2) 2-agmatinylcytidine synthetase TiaS from Methanopyrus kandleri (strain AV19 / DSM 6324 / JCM 9639 / NBRC 100938).